Consider the following 1110-residue polypeptide: Brother of CDO (1110 aa).

The first 25 residues, 1 to 25 (MTTCRRERPILTLLWILMATAGCLA), serve as a signal peptide directing secretion. Over 26-850 (DLNEVPQVTV…MVARASDLPY (825 aa)) the chain is Extracellular. 4 Ig-like C2-type domains span residues 31–118 (PQVT…ATVT), 124–208 (DFKL…VKTS), 229–310 (PLEA…VILY), and 318–402 (PEVT…VQLR). Disulfide bonds link C52-C101, C145-C195, C247-C294, and C339-C386. N-linked (GlcNAc...) asparagine glycosylation is found at N60, N71, N93, N184, and N270. The tract at residues 407–458 (DTTLRPGRDTKPIAATPPMPPSRPSRPDQMLREQPGLVKPPTSSVQPTSLKC) is disordered. A compositionally biased stretch (pro residues) spans 421–430 (ATPPMPPSRP). Fibronectin type-III domains follow at residues 469-566 (APII…GRRP), 603-698 (APDR…VVSG), and 707-807 (PVAG…TKAR). N512 carries an N-linked (GlcNAc...) asparagine glycan. Positions 561–610 (RTGRRPKPEIVASKEQQIQRDDPGASLQSSSQPDHGRLSPPEAPDRPTIS) are disordered. N-linked (GlcNAc...) asparagine glycosylation is found at N720 and N754. The disordered stretch occupies residues 809–828 (FSGQPGRPPPLTLAPPQPPP). The span at 814 to 828 (GRPPPLTLAPPQPPP) shows a compositional bias: pro residues. Residues 851–871 (LIVGVVLGSIVLIIVTFIPFC) form a helical membrane-spanning segment. Residues 872 to 1110 (LWRAWSKQKH…VSFETPPPTI (239 aa)) are Cytoplasmic-facing. The disordered stretch occupies residues 1065–1110 (SDSCQVGGGDWSSQHPSGTYTGQERGMRFSPSPSVHVSFETPPPTI). Residues 1075–1086 (WSSQHPSGTYTG) are compositionally biased toward polar residues.

In terms of assembly, part of a complex that contains BOC, CDON, NEO1, cadherins and CTNNB1. Interacts with SHH, DHH and IHH. Interacts with NTN3. Interacts with CDH2 and CTNNB1. Interacts with CDH15 only during the early stages of myoblast differentiation. As to expression, highly expressed in embryonic somites, limb buds, dermomyotomes and in the neural tube.

It is found in the membrane. In terms of biological role, component of a cell-surface receptor complex that mediates cell-cell interactions between muscle precursor cells. Promotes differentiation of myogenic cells. The polypeptide is Brother of CDO (Boc) (Mus musculus (Mouse)).